The following is a 556-amino-acid chain: 2-succinyl-5-enolpyruvyl-6-hydroxy-3-cyclohexene-1-carboxylate synthase (556 aa).

This sequence belongs to the TPP enzyme family. MenD subfamily. In terms of assembly, homodimer. Mg(2+) serves as cofactor. Requires Mn(2+) as cofactor. It depends on thiamine diphosphate as a cofactor.

The catalysed reaction is isochorismate + 2-oxoglutarate + H(+) = 5-enolpyruvoyl-6-hydroxy-2-succinyl-cyclohex-3-ene-1-carboxylate + CO2. It functions in the pathway quinol/quinone metabolism; 1,4-dihydroxy-2-naphthoate biosynthesis; 1,4-dihydroxy-2-naphthoate from chorismate: step 2/7. Its pathway is quinol/quinone metabolism; menaquinone biosynthesis. Catalyzes the thiamine diphosphate-dependent decarboxylation of 2-oxoglutarate and the subsequent addition of the resulting succinic semialdehyde-thiamine pyrophosphate anion to isochorismate to yield 2-succinyl-5-enolpyruvyl-6-hydroxy-3-cyclohexene-1-carboxylate (SEPHCHC). The sequence is that of 2-succinyl-5-enolpyruvyl-6-hydroxy-3-cyclohexene-1-carboxylate synthase from Saccharopolyspora erythraea (strain ATCC 11635 / DSM 40517 / JCM 4748 / NBRC 13426 / NCIMB 8594 / NRRL 2338).